Here is a 631-residue protein sequence, read N- to C-terminus: 1-deoxy-D-xylulose-5-phosphate synthase (631 aa).

Thiamine diphosphate is bound by residues His87 and 128-130 (GHS). Asp159 is a binding site for Mg(2+). Residues 160-161 (GA), Asn188, Phe295, and Glu377 each bind thiamine diphosphate. A Mg(2+)-binding site is contributed by Asn188.

The protein belongs to the transketolase family. DXPS subfamily. In terms of assembly, homodimer. The cofactor is Mg(2+). Requires thiamine diphosphate as cofactor.

The catalysed reaction is D-glyceraldehyde 3-phosphate + pyruvate + H(+) = 1-deoxy-D-xylulose 5-phosphate + CO2. The protein operates within metabolic intermediate biosynthesis; 1-deoxy-D-xylulose 5-phosphate biosynthesis; 1-deoxy-D-xylulose 5-phosphate from D-glyceraldehyde 3-phosphate and pyruvate: step 1/1. Catalyzes the acyloin condensation reaction between C atoms 2 and 3 of pyruvate and glyceraldehyde 3-phosphate to yield 1-deoxy-D-xylulose-5-phosphate (DXP). The chain is 1-deoxy-D-xylulose-5-phosphate synthase from Pseudomonas entomophila (strain L48).